The sequence spans 524 residues: Tubulin-specific chaperone E (524 aa).

The residue at position 2 (serine 2) is an N-acetylserine. In terms of domain architecture, CAP-Gly spans 27–71 (GAVPPVAGLWLGVEWDNPERGKHDGSHEGTMYFKCRHPTGGSFVR). LRR repeat units follow at residues 154 to 175 (NIRV…ILIA), 180 to 201 (DLEA…PTLT), 206 to 227 (TLKT…HCAP), 231 to 253 (VLQE…NALQ), 254 to 273 (NLRL…QLCL), 279 to 300 (RLEH…DAEI), and 309 to 330 (ALTY…NELD). The 39-residue stretch at 343–381 (NPLTKGDKAEEIIIAKIGQLKTLNRCQILPEERRGAELD) folds into the LRRCT domain. N6-acetyllysine is present on lysine 460. Serine 492 is modified (phosphoserine).

The protein belongs to the TBCE family. As to quaternary structure, supercomplex made of cofactors A to E. Cofactors A and D function by capturing and stabilizing tubulin in a quasi-native conformation. Cofactor E binds to the cofactor D-tubulin complex; interaction with cofactor C then causes the release of tubulin polypeptides that are committed to the native state. Cofactors B and E can form a heterodimer which binds to alpha-tubulin and enhances their ability to dissociate tubulin heterodimers. Interacts with TBCD.

The protein localises to the cytoplasm. It localises to the cytoskeleton. Its function is as follows. Tubulin-folding protein; involved in the second step of the tubulin folding pathway and in the regulation of tubulin heterodimer dissociation. Required for correct organization of microtubule cytoskeleton and mitotic splindle, and maintenance of the neuronal microtubule network. This chain is Tubulin-specific chaperone E (Tbce), found in Rattus norvegicus (Rat).